The chain runs to 224 residues: Iron-sulfur cluster repair protein ScdA (224 aa).

Belongs to the RIC family. ScdA subfamily. In terms of assembly, homodimer.

Its subcellular location is the cytoplasm. Di-iron-containing protein involved in the repair of iron-sulfur clusters damaged by oxidative and nitrosative stress conditions. This Staphylococcus epidermidis (strain ATCC 35984 / DSM 28319 / BCRC 17069 / CCUG 31568 / BM 3577 / RP62A) protein is Iron-sulfur cluster repair protein ScdA.